We begin with the raw amino-acid sequence, 179 residues long: UPF0227 protein Shewana3_2292 (179 aa).

Belongs to the UPF0227 family.

This is UPF0227 protein Shewana3_2292 from Shewanella sp. (strain ANA-3).